The following is a 112-amino-acid chain: Peptidyl-prolyl cis-trans isomerase (112 aa).

Residues 1–22 (MGVEKQVISSGNGQDFPKPGDR) are disordered. The PPIase FKBP-type domain occupies 20–108 (GDRITMHYTG…LFDVELLAIN (89 aa)).

It belongs to the FKBP-type PPIase family. FKBP1 subfamily.

It is found in the cytoplasm. The protein localises to the nucleus. It catalyses the reaction [protein]-peptidylproline (omega=180) = [protein]-peptidylproline (omega=0). In terms of biological role, PPIases accelerate the folding of proteins. It catalyzes the cis-trans isomerization of proline imidic peptide bonds in oligopeptides. Has an important role in sexual development and serves as the target for rapamycin action. This Schizosaccharomyces pombe (strain 972 / ATCC 24843) (Fission yeast) protein is Peptidyl-prolyl cis-trans isomerase (fkh1).